The primary structure comprises 347 residues: Protein YIPF1 homolog (347 aa).

Residues 1-115 (MSNYNNKHHD…FSDNVPLNTN (115 aa)) are disordered. Residues 1 to 166 (MSNYNNKHHD…FFNLIRENPD (166 aa)) are Cytoplasmic-facing. The segment covering 34-47 (NLFPNTNIDYNDYT) has biased composition (polar residues). Low complexity-rich tracts occupy residues 48 to 67 (QNRG…LQFQ) and 76 to 104 (NSNT…SSNN). Over residues 105-115 (KFSDNVPLNTN) the composition is skewed to polar residues. The chain crosses the membrane as a helical span at residues 167–187 (LYGPFWVLTSLVFIVAVTSNL). The Lumenal segment spans residues 188 to 207 (NEYFHSSDHKSWEVDIQKIV). The helical transmembrane segment at 208–228 (YSAITIYGYSFVIPLILWGIF) threads the bilayer. The Cytoplasmic portion of the chain corresponds to 229–232 (KWMN). A helical membrane pass occupies residues 233-253 (LGLRLLDMLCIYGYTLFIFVP). Topologically, residues 254 to 255 (AS) are lumenal. A helical transmembrane segment spans residues 256–276 (ILCVIPLQLVQWIIVAIASIV). Over 277-296 (SGLFLVTNIFTPLKEDFTKR) the chain is Cytoplasmic. Residues 297 to 317 (GLIICAVIGALHIGLALVLKL) traverse the membrane as a helical segment. Residues 318-347 (YFFANSTENFTISDSSSTPTPTPTNTTKLL) are Lumenal-facing. N-linked (GlcNAc...) asparagine glycans are attached at residues N322, N326, and N342.

The protein belongs to the YIP1 family.

The protein localises to the golgi apparatus. It localises to the cis-Golgi network membrane. The protein resides in the trans-Golgi network membrane. It is found in the late endosome membrane. The sequence is that of Protein YIPF1 homolog (yipf1) from Dictyostelium discoideum (Social amoeba).